The primary structure comprises 419 residues: Zinc finger CCCH domain-containing protein 62 (419 aa).

The C3H1-type zinc finger occupies 89-116; that stretch reads SLRKWVCKYWKDGKCKRGEQCQFLHSWS. WD repeat units follow at residues 129–168, 210–247, 256–293, 296–335, and 383–419; these read GHNK…CVHS, GVVG…ESDP, GHSG…CIMT, QHTG…KVVQ, and FSTH…GNKV.

The protein is Zinc finger CCCH domain-containing protein 62 (ZFWD4) of Arabidopsis thaliana (Mouse-ear cress).